The following is a 474-amino-acid chain: tRNA modification GTPase MnmE (474 aa).

(6S)-5-formyl-5,6,7,8-tetrahydrofolate-binding residues include Arg-25, Glu-82, and Lys-123. A TrmE-type G domain is found at 219–386 (GIKVVIAGKP…LKKHLYDSAM (168 aa)). Asn-229 is a binding site for K(+). Residues 229–234 (NAGKSS), 248–254 (SNISGTT), and 273–276 (DTAG) each bind GTP. Ser-233 serves as a coordination point for Mg(2+). K(+)-binding residues include Ser-248, Ile-250, and Thr-253. Thr-254 contributes to the Mg(2+) binding site. (6S)-5-formyl-5,6,7,8-tetrahydrofolate is bound at residue Lys-474.

Belongs to the TRAFAC class TrmE-Era-EngA-EngB-Septin-like GTPase superfamily. TrmE GTPase family. Homodimer. Heterotetramer of two MnmE and two MnmG subunits. Requires K(+) as cofactor.

The protein resides in the cytoplasm. Its function is as follows. Exhibits a very high intrinsic GTPase hydrolysis rate. Involved in the addition of a carboxymethylaminomethyl (cmnm) group at the wobble position (U34) of certain tRNAs, forming tRNA-cmnm(5)s(2)U34. In Blochmanniella floridana, this protein is tRNA modification GTPase MnmE.